The following is a 179-amino-acid chain: Inorganic pyrophosphatase (179 aa).

3 residues coordinate substrate: K30, R44, and Y56. Residues D66, D71, and D103 each contribute to the Mg(2+) site. Y143 is a binding site for substrate.

Belongs to the PPase family. As to quaternary structure, homohexamer. It depends on Mg(2+) as a cofactor.

It is found in the cytoplasm. The catalysed reaction is diphosphate + H2O = 2 phosphate + H(+). In terms of biological role, catalyzes the hydrolysis of inorganic pyrophosphate (PPi) forming two phosphate ions. In Wigglesworthia glossinidia brevipalpis, this protein is Inorganic pyrophosphatase.